We begin with the raw amino-acid sequence, 452 residues long: 1,4-beta-D-glucan cellobiohydrolase A (452 aa).

An N-terminal signal peptide occupies residues 1–17 (MHQRALLFSALLTAVRA). Asparagine 62 carries an N-linked (GlcNAc...) asparagine glycan. The active-site Nucleophile is glutamate 227. The Proton donor role is filled by glutamate 232. N-linked (GlcNAc...) asparagine glycans are attached at residues asparagine 285, asparagine 335, asparagine 402, and asparagine 445.

It belongs to the glycosyl hydrolase 7 (cellulase C) family.

The protein localises to the secreted. It carries out the reaction Hydrolysis of (1-&gt;4)-beta-D-glucosidic linkages in cellulose and cellotetraose, releasing cellobiose from the non-reducing ends of the chains.. In terms of biological role, the biological conversion of cellulose to glucose generally requires three types of hydrolytic enzymes: (1) Endoglucanases which cut internal beta-1,4-glucosidic bonds; (2) Exocellobiohydrolases that cut the disaccharide cellobiose from the non-reducing end of the cellulose polymer chain; (3) Beta-1,4-glucosidases which hydrolyze the cellobiose and other short cello-oligosaccharides to glucose. This is 1,4-beta-D-glucan cellobiohydrolase A (cbhA) from Aspergillus niger.